The sequence spans 117 residues: UPF0342 protein LBUL_1430 (117 aa).

This sequence belongs to the UPF0342 family.

This is UPF0342 protein LBUL_1430 from Lactobacillus delbrueckii subsp. bulgaricus (strain ATCC BAA-365 / Lb-18).